The following is a 151-amino-acid chain: UPF0102 protein Ava_4800 (151 aa).

This sequence belongs to the UPF0102 family.

The polypeptide is UPF0102 protein Ava_4800 (Trichormus variabilis (strain ATCC 29413 / PCC 7937) (Anabaena variabilis)).